The chain runs to 132 residues: NADPH-dependent 7-cyano-7-deazaguanine reductase (132 aa).

The active-site Thioimide intermediate is C43. D50 functions as the Proton donor in the catalytic mechanism. Residues V65–L67 and H84–E85 contribute to the substrate site.

It belongs to the GTP cyclohydrolase I family. QueF type 1 subfamily.

Its subcellular location is the cytoplasm. It carries out the reaction 7-aminomethyl-7-carbaguanine + 2 NADP(+) = 7-cyano-7-deazaguanine + 2 NADPH + 3 H(+). The protein operates within tRNA modification; tRNA-queuosine biosynthesis. Functionally, catalyzes the NADPH-dependent reduction of 7-cyano-7-deazaguanine (preQ0) to 7-aminomethyl-7-deazaguanine (preQ1). The polypeptide is NADPH-dependent 7-cyano-7-deazaguanine reductase (Thermosynechococcus vestitus (strain NIES-2133 / IAM M-273 / BP-1)).